The chain runs to 647 residues: Chaperone protein DnaK (647 aa).

A Phosphothreonine; by autocatalysis modification is found at Thr198. The tract at residues 606-634 (GASAEGMDPNQFQQGADNAGESNQADDDV) is disordered. The segment covering 615-628 (NQFQQGADNAGESN) has biased composition (polar residues).

The protein belongs to the heat shock protein 70 family.

Functionally, acts as a chaperone. This is Chaperone protein DnaK from Psychrobacter cryohalolentis (strain ATCC BAA-1226 / DSM 17306 / VKM B-2378 / K5).